A 364-amino-acid polypeptide reads, in one-letter code: Small ribosomal subunit biogenesis GTPase RsgA (364 aa).

Residues 101–264 enclose the CP-type G domain; sequence KGLVEKPGVP…VIDTPGLREL (164 aa). Residues 154–157 and 206–214 contribute to the GTP site; these read NKSD and GSSGAGKST. Residues C288, C293, H295, and C301 each coordinate Zn(2+). The tract at residues 339 to 364 is disordered; it reads QVAQKRKRKTIPRQGKRWRREHGDGQ. Residues 342–358 show a composition bias toward basic residues; that stretch reads QKRKRKTIPRQGKRWRR.

It belongs to the TRAFAC class YlqF/YawG GTPase family. RsgA subfamily. Monomer. Associates with 30S ribosomal subunit, binds 16S rRNA. It depends on Zn(2+) as a cofactor.

It is found in the cytoplasm. In terms of biological role, one of several proteins that assist in the late maturation steps of the functional core of the 30S ribosomal subunit. Helps release RbfA from mature subunits. May play a role in the assembly of ribosomal proteins into the subunit. Circularly permuted GTPase that catalyzes slow GTP hydrolysis, GTPase activity is stimulated by the 30S ribosomal subunit. The sequence is that of Small ribosomal subunit biogenesis GTPase RsgA from Syntrophotalea carbinolica (strain DSM 2380 / NBRC 103641 / GraBd1) (Pelobacter carbinolicus).